The following is a 727-amino-acid chain: Sodium-dependent neutral amino acid transporter SLC6A17 (727 aa).

Over 1–68 the chain is Cytoplasmic; that stretch reads MPKNSKVTQR…DRPAWNSKLQ (68 aa). Residues Ser-13 and Ser-20 each carry the phosphoserine modification. A helical membrane pass occupies residues 69 to 89; the sequence is YILAQIGFSVGLGNIWRFPYL. Residues 90-96 are Extracellular-facing; the sequence is CQKNGGG. The chain crosses the membrane as a helical span at residues 97–116; that stretch reads AYLVPYLVLLIIIGIPLFFL. Residues 117-140 lie on the Cytoplasmic side of the membrane; the sequence is ELAVGQRIRRGSIGVWHYVCPRLG. The helical transmembrane segment at 141–161 threads the bilayer; sequence GIGFSSCIVCLFVGLYYNVII. Residues 162-224 lie on the Extracellular side of the membrane; sequence GWSVFYFFKS…NSISESGGLN (63 aa). A glycan (N-linked (GlcNAc...) asparagine) is linked at Asn-186. A helical membrane pass occupies residues 225 to 243; the sequence is WKMTVCLLVAWSIVGMAVV. Residues 244-251 are Cytoplasmic-facing; the sequence is KGIQSSGK. Residues 252-269 form a helical membrane-spanning segment; that stretch reads VMYFSSLFPYVVLACFLV. At 270–304 the chain is on the extracellular side; the sequence is RGLLLRGAVDGILHMFTPKLDKMLDPQVWREAATQ. Residues 305–322 traverse the membrane as a helical segment; sequence VFFALGLGFGGVIAFSSY. Topologically, residues 323–333 are cytoplasmic; that stretch reads NKQDNNCHFDA. Residues 334–355 traverse the membrane as a helical segment; the sequence is ALVSFINFFTSVLATLVVFAVL. Topologically, residues 356 to 451 are extracellular; sequence GFKANIMNEK…FIAFTEAMTH (96 aa). Tyr-377 carries the post-translational modification Phosphotyrosine. N-linked (GlcNAc...) asparagine glycosylation is present at Asn-393. A helical membrane pass occupies residues 452–471; sequence FPASPFWSVMFFLMLINLGL. The Cytoplasmic portion of the chain corresponds to 472 to 494; the sequence is GSMIGTMAGITTPIIDTFKVPKE. A helical transmembrane segment spans residues 495 to 513; sequence MFTVGCCVFAFFVGLLFVQ. At 514 to 528 the chain is on the extracellular side; it reads RSGNYFVTMFDDYSA. A helical membrane pass occupies residues 529-549; sequence TLPLTVIVILENIAVAWIYGT. The Cytoplasmic segment spans residues 550–569; sequence KKFMQELTEMLGFRPYRFYF. A helical transmembrane segment spans residues 570–591; that stretch reads YMWKFVSPLCMAVLTTASIIQL. Topologically, residues 592 to 618 are extracellular; it reads GVSPPGYSAWIKEEAAERYLYFPNWAM. A helical transmembrane segment spans residues 619–641; the sequence is ALLITLIAVATLPIPVVFILRHF. Over 642 to 727 the chain is Cytoplasmic; the sequence is HLLSDGSNTL…LLASTPESEL (86 aa). A phosphoserine mark is found at Ser-665 and Ser-701. Residues 680–727 form a disordered region; the sequence is VPSEAPSPMPTHRSYLGPGSTSPLESSSHPNGRYGSGYLLASTPESEL. A compositionally biased stretch (polar residues) spans 698–709; that stretch reads GSTSPLESSSHP.

The protein belongs to the sodium:neurotransmitter symporter (SNF) (TC 2.A.22) family. Found exclusively in the central nervous system and is more abundant in the cerebellum and the cerebral cortex. Expressed in PC-12 cell line.

It localises to the cytoplasmic vesicle. The protein localises to the secretory vesicle. Its subcellular location is the synaptic vesicle membrane. The protein resides in the postsynapse. It is found in the presynapse. It carries out the reaction L-proline(in) + Na(+)(in) = L-proline(out) + Na(+)(out). The enzyme catalyses L-leucine(in) + Na(+)(in) = L-leucine(out) + Na(+)(out). The catalysed reaction is glycine(in) + Na(+)(in) = glycine(out) + Na(+)(out). It catalyses the reaction L-alanine(in) + Na(+)(in) = L-alanine(out) + Na(+)(out). It carries out the reaction L-glutamine(in) + Na(+)(in) = L-glutamine(out) + Na(+)(out). Its function is as follows. Synaptic vesicle transporter with apparent selectivity for neutral amino acids. The transport is sodium-coupled but chloride-independent, likely driven by the proton electrochemical gradient generated by vacuolar H(+)-ATPase in an overall electrogenic mechanism. May contribute to the synaptic uptake of neurotransmitter precursors in a process coupled in part to vesicle exocytosis. In Rattus norvegicus (Rat), this protein is Sodium-dependent neutral amino acid transporter SLC6A17.